Here is a 318-residue protein sequence, read N- to C-terminus: Trans-prenyltransferase (318 aa).

The chain crosses the membrane as a helical span at residues 1–21 (MLHLIYISIIVVLIIILISYT). Positions 85, 88, and 122 each coordinate isopentenyl diphosphate. Mg(2+) is bound by residues Asp129 and Asp135. Arg140 contributes to the dimethylallyl diphosphate binding site. An isopentenyl diphosphate-binding site is contributed by Arg141. Dimethylallyl diphosphate contacts are provided by Lys216, Thr217, and Gln254.

This sequence belongs to the FPP/GGPP synthase family. Asfivirus trans-prenyltransferase subfamily. Requires Mg(2+) as cofactor.

The protein resides in the host endoplasmic reticulum. The protein localises to the host membrane. It catalyses the reaction isopentenyl diphosphate + dimethylallyl diphosphate = (2E)-geranyl diphosphate + diphosphate. The catalysed reaction is isopentenyl diphosphate + (2E)-geranyl diphosphate = (2E,6E)-farnesyl diphosphate + diphosphate. The enzyme catalyses isopentenyl diphosphate + (2E,6E)-farnesyl diphosphate = (2E,6E,10E)-geranylgeranyl diphosphate + diphosphate. It carries out the reaction isopentenyl diphosphate + (2E,6E,10E)-geranylgeranyl diphosphate = (2E,6E,10E,14E)-geranylfarnesyl diphosphate + diphosphate. It functions in the pathway isoprenoid biosynthesis; farnesyl diphosphate biosynthesis; farnesyl diphosphate from geranyl diphosphate and isopentenyl diphosphate: step 1/1. The protein operates within isoprenoid biosynthesis; geranyl diphosphate biosynthesis; geranyl diphosphate from dimethylallyl diphosphate and isopentenyl diphosphate: step 1/1. It participates in isoprenoid biosynthesis; geranylgeranyl diphosphate biosynthesis; geranylgeranyl diphosphate from farnesyl diphosphate and isopentenyl diphosphate: step 1/1. Trans-prenyltransferase that catalyzes the sequential condensation of isopentenyl diphosphate (IPP) with different allylic diphosphates, such as dimethylallyl diphosphate (DMAPP), geranyl diphosphate (GPP), farnesyl diphosphate (FPP) and geranylgeranyl diphosphate (GGPP), farnesyl diphosphate being the best allylic substrate. The protein is Trans-prenyltransferase of African swine fever virus (isolate Tick/Malawi/Lil 20-1/1983) (ASFV).